A 55-amino-acid polypeptide reads, in one-letter code: uncharacterized protein (55 aa).

Positions 1 to 25 (MKNNDKKKEVQRKYREEIKKKKQKN) are disordered. The helical transmembrane segment at 35-55 (TIIVVTIIVLFIFFTYTLQGF) threads the bilayer.

It localises to the membrane. This is an uncharacterized protein from Bacillus subtilis (strain 168).